Consider the following 258-residue polypeptide: Membrane-associated protein Vipp1 (258 aa).

Residues 217–258 (MLPPATPVTQAQLPPQQETTPAKSNEVVDAELDSLRKQLDQL) form a disordered region. Positions 223-239 (PVTQAQLPPQQETTPAK) are enriched in polar residues. Basic and acidic residues predominate over residues 249 to 258 (DSLRKQLDQL).

This sequence belongs to the PspA/Vipp/IM30 family. As to quaternary structure, polymerizes to form rings, filaments and ribbons. Rings are formed by stacked rungs that tilt to give a dome-shaped curvature. Rings form with symmetries ranging from C11 (55 subunits) to C17 (119 subunits).

It localises to the cell inner membrane. A membrane remodeling protein capable of forming rings and/or filaments on membranes, which then curve and tubulate the bilayer. Rings will form on liposomes, altering their positive curvature so the lipid bilayer is remodeled into a negative curve as the membrane enters the ring. Ring stacks of varying lengths can be seen joining isolated liposomes. A lipid monolayer can be drawn into the center of the rings. Required for thylakoid formation. The protein is Membrane-associated protein Vipp1 of Nostoc punctiforme (strain ATCC 29133 / PCC 73102).